The primary structure comprises 418 residues: Pyrophosphate--fructose 6-phosphate 1-phosphotransferase (418 aa).

G13 contributes to the diphosphate binding site. N111 provides a ligand contact to Mg(2+). Substrate contacts are provided by residues 139-141 (TID), 187-189 (MGR), E244, and 295-298 (YLQR). D141 serves as the catalytic Proton acceptor.

It belongs to the phosphofructokinase type A (PFKA) family. PPi-dependent PFK group II subfamily. Clade 'B2' sub-subfamily. In terms of assembly, homodimer. Mg(2+) serves as cofactor.

The protein localises to the cytoplasm. It catalyses the reaction beta-D-fructose 6-phosphate + diphosphate = beta-D-fructose 1,6-bisphosphate + phosphate + H(+). It functions in the pathway carbohydrate degradation; glycolysis; D-glyceraldehyde 3-phosphate and glycerone phosphate from D-glucose: step 3/4. Its activity is regulated as follows. Non-allosteric. Catalyzes the phosphorylation of D-fructose 6-phosphate, the first committing step of glycolysis. Uses inorganic phosphate (PPi) as phosphoryl donor instead of ATP like common ATP-dependent phosphofructokinases (ATP-PFKs), which renders the reaction reversible, and can thus function both in glycolysis and gluconeogenesis. Consistently, PPi-PFK can replace the enzymes of both the forward (ATP-PFK) and reverse (fructose-bisphosphatase (FBPase)) reactions. This chain is Pyrophosphate--fructose 6-phosphate 1-phosphotransferase, found in Xanthomonas campestris pv. campestris (strain B100).